We begin with the raw amino-acid sequence, 35 residues long: Kappa-theraphotoxin-Tb1b (35 aa).

Cystine bridges form between Cys-3-Cys-18, Cys-10-Cys-23, and Cys-17-Cys-30.

This sequence belongs to the neurotoxin 10 (Hwtx-1) family. 58 subfamily. Monomer. As to expression, expressed by the venom gland.

Its subcellular location is the secreted. Functionally, low-affinity blocker of Kv4.2/KCND2 voltage-gated potassium channels. Is presumed to shift the voltage-dependence of channel activation to more depolarized potentials and to bind to the S3-S4 linker region of the voltage sensor domain. This is Kappa-theraphotoxin-Tb1b from Theraphosa blondi (Goliath birdeating spider).